A 388-amino-acid polypeptide reads, in one-letter code: UPF0496 protein 1 (388 aa).

The segment at 1–25 (MGNSSSSGSHRPPRPASSESALPPA) is disordered. A coiled-coil region spans residues 198 to 227 (QAVYRQQLTMLEKLQQRKHRLDKKVRAIKA). The next 2 membrane-spanning stretches (helical) occupy residues 234–254 (IIFA…AAIA) and 257–277 (PVAA…GKWI). Residues 344-376 (VEEIKKKLEVFMKSVEDLGEQADRCSRDIRRAR) adopt a coiled-coil conformation.

The protein belongs to the UPF0496 family.

It is found in the membrane. The chain is UPF0496 protein 1 from Oryza sativa subsp. japonica (Rice).